The following is a 498-amino-acid chain: Actin-binding protein WASF2 (498 aa).

Disordered regions lie at residues 173-203 and 240-435; these read KEKRKHRKEKKDNPNRGNVNPRKIKTRKEEW and NVDA…AVSD. The segment covering 252–263 has biased composition (low complexity); that stretch reads SDSASSPSPSFS. The span at 298 to 407 shows a compositional bias: pro residues; the sequence is SHPPPAPPLG…PPPGPPPPPF (110 aa). The WH2 domain maps to 436-453; that stretch reads ARSDLLSAIRQGFQLRRV. A Phosphoserine modification is found at Ser474.

It belongs to the SCAR/WAVE family. In terms of assembly, binds actin and the Arp2/3 complex. Interacts with BAIAP2. Component of the WAVE2 complex composed of ABI1, CYFIP1/SRA1, NCKAP1/NAP1 (NCKAP1l/HEM1 in hematopoietic cells) and WASF2/WAVE2. Directly interacts with BRK1. Interacts with FNBP1L (via the SH3 domain). As to quaternary structure, (Microbial infection) Interacts with human cytomegalovirus protein UL135. As to expression, expressed in all tissues with strongest expression in placenta, lung, and peripheral blood leukocytes, but not in skeletal muscle.

The protein localises to the cytoplasm. It is found in the cytoskeleton. Its subcellular location is the cell projection. The protein resides in the lamellipodium. It localises to the basolateral cell membrane. Functionally, downstream effector molecule involved in the transmission of signals from tyrosine kinase receptors and small GTPases to the actin cytoskeleton. Promotes formation of actin filaments. Part of the WAVE complex that regulates lamellipodia formation. The WAVE complex regulates actin filament reorganization via its interaction with the Arp2/3 complex. The protein is Actin-binding protein WASF2 of Homo sapiens (Human).